The primary structure comprises 594 residues: RAS guanyl-releasing protein 2-B (594 aa).

The 119-residue stretch at 3–121 folds into the N-terminal Ras-GEF domain; it reads SSDLDKGLTI…SLIDIESVPS (119 aa). Residues 149-382 enclose the Ras-GEF domain; that stretch reads DPAELAEHLT…YQLSLQREPR (234 aa). Residues 377–403 are disordered; the sequence is LQREPRARSTQTHAKSPPSPSPPLEEW. EF-hand domains lie at 418–453 and 455–482; these read HIEK…FPYL and AFNE…ASSV. Positions 431, 433, 435, 437, 442, 460, 462, 464, 466, and 471 each coordinate Ca(2+). Residues 490-540 form a Phorbol-ester/DAG-type zinc finger; that stretch reads IHNFAERTFLRPVSCQHCRNLILGIYKKGLKCKACGITCHKHCRDHLSIEC.

It belongs to the RASGRP family.

It localises to the cytoplasm. The protein resides in the cytosol. Its subcellular location is the cell membrane. The protein localises to the synapse. It is found in the synaptosome. Functions as a calcium- and DAG-regulated nucleotide exchange factor specifically activating Rap through the exchange of bound GDP for GTP. May function in cell aggregation and adhesion. This chain is RAS guanyl-releasing protein 2-B (rasgrp2-b), found in Xenopus laevis (African clawed frog).